Reading from the N-terminus, the 181-residue chain is NADH-quinone oxidoreductase subunit B (181 aa).

Positions 60, 61, 125, and 155 each coordinate [4Fe-4S] cluster.

The protein belongs to the complex I 20 kDa subunit family. As to quaternary structure, NDH-1 is composed of 14 different subunits. Subunits NuoB, C, D, E, F, and G constitute the peripheral sector of the complex. [4Fe-4S] cluster serves as cofactor.

Its subcellular location is the cell inner membrane. The catalysed reaction is a quinone + NADH + 5 H(+)(in) = a quinol + NAD(+) + 4 H(+)(out). Functionally, NDH-1 shuttles electrons from NADH, via FMN and iron-sulfur (Fe-S) centers, to quinones in the respiratory chain. Couples the redox reaction to proton translocation (for every two electrons transferred, four hydrogen ions are translocated across the cytoplasmic membrane), and thus conserves the redox energy in a proton gradient. The sequence is that of NADH-quinone oxidoreductase subunit B from Novosphingobium aromaticivorans (strain ATCC 700278 / DSM 12444 / CCUG 56034 / CIP 105152 / NBRC 16084 / F199).